The sequence spans 418 residues: Zinc finger protein 566 (418 aa).

A KRAB domain is found at 6–77 (VMFSDVSVDF…DRELTRGQWP (72 aa)). The C2H2-type 1; degenerate zinc finger occupies 169–193 (KFCASKEYRKTFRHGSQFATHEIIH). C2H2-type zinc fingers lie at residues 199–221 (YECK…QKIH), 227–249 (FECK…HRIH), 255–277 (YECK…QRIH), 283–305 (YECK…QRIH), 311–333 (YECK…QRIH), 339–361 (YECK…QRIH), and 367–389 (YECK…HRIH). Glycyl lysine isopeptide (Lys-Gly) (interchain with G-Cter in SUMO2) cross-links involve residues Lys314 and Lys328.

This sequence belongs to the krueppel C2H2-type zinc-finger protein family.

The protein resides in the nucleus. In terms of biological role, may be involved in transcriptional regulation. In Pan troglodytes (Chimpanzee), this protein is Zinc finger protein 566 (ZNF566).